We begin with the raw amino-acid sequence, 756 residues long: Hyperosmolality-gated Ca2+ permeable channel 1.5 (756 aa).

10 consecutive transmembrane segments (helical) span residues 7–27, 101–121, 154–174, 373–393, 425–445, 465–485, 510–530, 574–594, 628–648, and 651–671; these read IGVA…AFAI, IYLL…TVMV, SRFW…CFVL, LVIA…IAFV, FLPG…LMLM, YYMF…TALQ, ATFF…GEIL, FILG…ILVF, VVIA…TKKA, and STPL…FCQG. A disordered region spans residues 731–756; the sequence is PDKTPDLVATKRGSRRFNSGSAETFT. A compositionally biased stretch (polar residues) spans 746 to 756; the sequence is RFNSGSAETFT.

It belongs to the CSC1 (TC 1.A.17) family.

It is found in the membrane. Its function is as follows. Acts as an osmosensitive calcium-permeable cation channel. The polypeptide is Hyperosmolality-gated Ca2+ permeable channel 1.5 (Arabidopsis thaliana (Mouse-ear cress)).